A 112-amino-acid chain; its full sequence is uncharacterized protein (112 aa).

N-linked (GlcNAc...) asparagine; by host glycans are attached at residues Asn-29 and Asn-60. The chain crosses the membrane as a helical span at residues 66–86; sequence IFNGLGFILIVIFIYLLLITL.

It belongs to the asfivirus B117L family.

Its subcellular location is the host membrane. It is found in the virion. This is an uncharacterized protein from Ornithodoros (relapsing fever ticks).